The primary structure comprises 329 residues: Probable quinone oxidoreductase (329 aa).

S191 is subject to Phosphoserine.

This sequence belongs to the zinc-containing alcohol dehydrogenase family. Quinone oxidoreductase subfamily.

It is found in the cytoplasm. Its subcellular location is the nucleus. The enzyme catalyses 2 a quinone + NADPH + H(+) = 2 a 1,4-benzosemiquinone + NADP(+). This chain is Probable quinone oxidoreductase (zta1), found in Schizosaccharomyces pombe (strain 972 / ATCC 24843) (Fission yeast).